A 470-amino-acid chain; its full sequence is 6-phospho-beta-galactosidase (470 aa).

Positions 19, 116, 159, 160, and 297 each coordinate D-galactose 6-phosphate. Glu160 functions as the Proton donor in the catalytic mechanism. Catalysis depends on Glu375, which acts as the Nucleophile. Ser430, Trp431, Lys437, and Tyr439 together coordinate D-galactose 6-phosphate.

This sequence belongs to the glycosyl hydrolase 1 family.

It carries out the reaction a 6-phospho-beta-D-galactoside + H2O = D-galactose 6-phosphate + an alcohol. It functions in the pathway carbohydrate metabolism; lactose degradation; D-galactose 6-phosphate and beta-D-glucose from lactose 6-phosphate: step 1/1. In Staphylococcus aureus (strain Mu3 / ATCC 700698), this protein is 6-phospho-beta-galactosidase.